Reading from the N-terminus, the 212-residue chain is Peptide methionine sulfoxide reductase MsrA (212 aa).

C51 is an active-site residue.

It belongs to the MsrA Met sulfoxide reductase family.

It carries out the reaction L-methionyl-[protein] + [thioredoxin]-disulfide + H2O = L-methionyl-(S)-S-oxide-[protein] + [thioredoxin]-dithiol. The enzyme catalyses [thioredoxin]-disulfide + L-methionine + H2O = L-methionine (S)-S-oxide + [thioredoxin]-dithiol. In terms of biological role, has an important function as a repair enzyme for proteins that have been inactivated by oxidation. Catalyzes the reversible oxidation-reduction of methionine sulfoxide in proteins to methionine. The protein is Peptide methionine sulfoxide reductase MsrA of Vibrio cholerae serotype O1 (strain ATCC 39541 / Classical Ogawa 395 / O395).